A 443-amino-acid polypeptide reads, in one-letter code: Probable D-serine dehydratase (443 aa).

Lys-118 carries the N6-(pyridoxal phosphate)lysine modification.

This sequence belongs to the serine/threonine dehydratase family. DsdA subfamily. Pyridoxal 5'-phosphate is required as a cofactor.

The catalysed reaction is D-serine = pyruvate + NH4(+). The chain is Probable D-serine dehydratase from Aeromonas hydrophila subsp. hydrophila (strain ATCC 7966 / DSM 30187 / BCRC 13018 / CCUG 14551 / JCM 1027 / KCTC 2358 / NCIMB 9240 / NCTC 8049).